The following is a 327-amino-acid chain: Phospho-N-acetylmuramoyl-pentapeptide-transferase (327 aa).

A run of 10 helical transmembrane segments spans residues 3 to 23, 51 to 71, 79 to 99, 115 to 135, 140 to 160, 172 to 192, 197 to 217, 223 to 243, 248 to 268, and 306 to 326; these read TAIIAGITTFILTIIGIPAFI, TMGGTVFLLASIVASFVIALF, VTTILFILFLYGLVGFLDDFL, LFLQLVGGVVFYLFFERHGGG, VFGFPLELGFLYIFFVLFWLV, IDGLASISVVISLGAYAVIAL, FDLLIVIFSMIGGLLGFFGFN, IFMGDVGSLALGGMLAALSIA, WTLLLIGIVYVFETASVMLQV, and VDFLFWGIGLVASLITLAILY.

Belongs to the glycosyltransferase 4 family. MraY subfamily. Mg(2+) serves as cofactor.

It localises to the cell membrane. It catalyses the reaction UDP-N-acetyl-alpha-D-muramoyl-L-alanyl-gamma-D-glutamyl-L-lysyl-D-alanyl-D-alanine + di-trans,octa-cis-undecaprenyl phosphate = Mur2Ac(oyl-L-Ala-gamma-D-Glu-L-Lys-D-Ala-D-Ala)-di-trans,octa-cis-undecaprenyl diphosphate + UMP. Its pathway is cell wall biogenesis; peptidoglycan biosynthesis. In terms of biological role, catalyzes the initial step of the lipid cycle reactions in the biosynthesis of the cell wall peptidoglycan: transfers peptidoglycan precursor phospho-MurNAc-pentapeptide from UDP-MurNAc-pentapeptide onto the lipid carrier undecaprenyl phosphate, yielding undecaprenyl-pyrophosphoryl-MurNAc-pentapeptide, known as lipid I. This Streptococcus gordonii (strain Challis / ATCC 35105 / BCRC 15272 / CH1 / DL1 / V288) protein is Phospho-N-acetylmuramoyl-pentapeptide-transferase.